Consider the following 421-residue polypeptide: D-inositol 3-phosphate glycosyltransferase (421 aa).

Residue H9 participates in 1D-myo-inositol 3-phosphate binding. UDP-N-acetyl-alpha-D-glucosamine contacts are provided by residues 15-16 and G23; that span reads QP. 1D-myo-inositol 3-phosphate-binding positions include 20-25, K78, Y110, T134, and R154; that span reads DAGGMN. The UDP-N-acetyl-alpha-D-glucosamine site is built by R231, K236, and R294. Mg(2+)-binding residues include Y303, Q304, and A306. UDP-N-acetyl-alpha-D-glucosamine contacts are provided by E316 and E324. T330 lines the Mg(2+) pocket.

It belongs to the glycosyltransferase group 1 family. MshA subfamily. Homodimer.

The enzyme catalyses 1D-myo-inositol 3-phosphate + UDP-N-acetyl-alpha-D-glucosamine = 1D-myo-inositol 2-acetamido-2-deoxy-alpha-D-glucopyranoside 3-phosphate + UDP + H(+). Functionally, catalyzes the transfer of a N-acetyl-glucosamine moiety to 1D-myo-inositol 3-phosphate to produce 1D-myo-inositol 2-acetamido-2-deoxy-glucopyranoside 3-phosphate in the mycothiol biosynthesis pathway. This chain is D-inositol 3-phosphate glycosyltransferase, found in Corynebacterium aurimucosum (strain ATCC 700975 / DSM 44827 / CIP 107346 / CN-1) (Corynebacterium nigricans).